Here is a 107-residue protein sequence, read N- to C-terminus: Ig kappa chain V-VI region NQ2-48.2.2 (107 aa).

The framework-1 stretch occupies residues 1–23 (QILLTQSPAIMSASPGQKVTMTC). Cysteines 23 and 87 form a disulfide. A complementarity-determining-1 region spans residues 24–33 (SASSSVSYMH). A framework-2 region spans residues 34-48 (WYQQKSGTSPKRWIY). The segment at 49–55 (DTSKLAS) is complementarity-determining-2. Residues 56-87 (GVPARFSGSGSATSYSLTITSMQAEDAATYYC) are framework-3. The interval 88–96 (QQWSSNPLT) is complementarity-determining-3. A framework-4 region spans residues 97–106 (FGAGTKLXLK).

In terms of biological role, anti-2-phenyl oxazolone (PHOX) Antibody. In Mus musculus (Mouse), this protein is Ig kappa chain V-VI region NQ2-48.2.2.